Consider the following 384-residue polypeptide: S-adenosylmethionine synthase (384 aa).

H15 is a binding site for ATP. D17 lines the Mg(2+) pocket. Residue E43 participates in K(+) binding. L-methionine is bound by residues E56 and Q99. Residues 99–109 are flexible loop; it reads QSPDINQGVDR. Residues 164 to 166, 231 to 232, D240, 246 to 247, A263, and K267 contribute to the ATP site; these read DAK, RF, and RK. D240 serves as a coordination point for L-methionine. K271 is a binding site for L-methionine.

Belongs to the AdoMet synthase family. As to quaternary structure, homotetramer; dimer of dimers. It depends on Mg(2+) as a cofactor. K(+) is required as a cofactor.

It is found in the cytoplasm. It catalyses the reaction L-methionine + ATP + H2O = S-adenosyl-L-methionine + phosphate + diphosphate. It participates in amino-acid biosynthesis; S-adenosyl-L-methionine biosynthesis; S-adenosyl-L-methionine from L-methionine: step 1/1. Functionally, catalyzes the formation of S-adenosylmethionine (AdoMet) from methionine and ATP. The overall synthetic reaction is composed of two sequential steps, AdoMet formation and the subsequent tripolyphosphate hydrolysis which occurs prior to release of AdoMet from the enzyme. The chain is S-adenosylmethionine synthase from Shewanella piezotolerans (strain WP3 / JCM 13877).